A 322-amino-acid polypeptide reads, in one-letter code: Putative nickel/cobalt efflux system HI_1248 (322 aa).

Transmembrane regions (helical) follow at residues 7 to 27, 54 to 74, 100 to 120, 137 to 157, 228 to 248, and 294 to 314; these read GLVL…WFFL, AGTT…LGPG, LSSL…VVVL, TALL…LRAY, IFVL…LAVL, and LIAG…TTIS.

Belongs to the NiCoT transporter (TC 2.A.52) family.

It localises to the cell membrane. Functionally, efflux system for nickel and cobalt. This chain is Putative nickel/cobalt efflux system HI_1248, found in Haemophilus influenzae (strain ATCC 51907 / DSM 11121 / KW20 / Rd).